The sequence spans 286 residues: CCR4-NOT transcription complex subunit 7 (286 aa).

5 residues coordinate a divalent metal cation: aspartate 40, glutamate 42, aspartate 161, aspartate 230, and glutamate 278.

The protein belongs to the CAF1 family. Component of the CCR4-NOT complex. Mn(2+) is required as a cofactor. Mg(2+) serves as cofactor. It depends on Co(2+) as a cofactor.

Its subcellular location is the nucleus. The protein localises to the cytoplasm. It catalyses the reaction Exonucleolytic cleavage of poly(A) to 5'-AMP.. Its function is as follows. Has 3'-5' poly(A) exoribonuclease activity for synthetic poly(A) RNA substrate. Catalytic component of the CCR4-NOT complex which is one of the major cellular mRNA deadenylases and is linked to various cellular processes including bulk mRNA degradation, miRNA-mediated repression, translational repression during translational initiation and general transcription regulation. During miRNA-mediated repression the complex also seems to act as translational repressor during translational initiation. Additional complex functions may be a consequence of its influence on mRNA expression. The chain is CCR4-NOT transcription complex subunit 7 (cnot7) from Danio rerio (Zebrafish).